A 294-amino-acid polypeptide reads, in one-letter code: Acetyl-coenzyme A carboxylase carboxyl transferase subunit beta (294 aa).

Residues 30–294 form the CoA carboxyltransferase N-terminal domain; sequence IMTKCPECKK…PEVGGEADGE (265 aa). Zn(2+) is bound by residues cysteine 34, cysteine 37, cysteine 53, and cysteine 56. A C4-type zinc finger spans residues 34-56; that stretch reads CPECKKIMYTKELQKNLMVCNYC.

The protein belongs to the AccD/PCCB family. In terms of assembly, acetyl-CoA carboxylase is a heterohexamer composed of biotin carboxyl carrier protein (AccB), biotin carboxylase (AccC) and two subunits each of ACCase subunit alpha (AccA) and ACCase subunit beta (AccD). The cofactor is Zn(2+).

The protein localises to the cytoplasm. The enzyme catalyses N(6)-carboxybiotinyl-L-lysyl-[protein] + acetyl-CoA = N(6)-biotinyl-L-lysyl-[protein] + malonyl-CoA. The protein operates within lipid metabolism; malonyl-CoA biosynthesis; malonyl-CoA from acetyl-CoA: step 1/1. Functionally, component of the acetyl coenzyme A carboxylase (ACC) complex. Biotin carboxylase (BC) catalyzes the carboxylation of biotin on its carrier protein (BCCP) and then the CO(2) group is transferred by the transcarboxylase to acetyl-CoA to form malonyl-CoA. In Listeria monocytogenes serotype 4b (strain F2365), this protein is Acetyl-coenzyme A carboxylase carboxyl transferase subunit beta.